The following is a 246-amino-acid chain: Probable fimbrial chaperone YadV (246 aa).

Residues 1–25 (MFFNTKHTTALCFVTCMAFSSSSIA) form the signal peptide.

It belongs to the periplasmic pilus chaperone family.

It is found in the periplasm. In terms of biological role, part of the yadCKLM-htrE-yadVN fimbrial operon. Could contribute to adhesion to various surfaces in specific environmental niches. The protein is Probable fimbrial chaperone YadV (yadV) of Escherichia coli (strain K12).